Consider the following 110-residue polypeptide: Phosphoribosyl-ATP pyrophosphatase (110 aa).

The protein belongs to the PRA-PH family.

It is found in the cytoplasm. It carries out the reaction 1-(5-phospho-beta-D-ribosyl)-ATP + H2O = 1-(5-phospho-beta-D-ribosyl)-5'-AMP + diphosphate + H(+). The protein operates within amino-acid biosynthesis; L-histidine biosynthesis; L-histidine from 5-phospho-alpha-D-ribose 1-diphosphate: step 2/9. In Pseudomonas fluorescens (strain ATCC BAA-477 / NRRL B-23932 / Pf-5), this protein is Phosphoribosyl-ATP pyrophosphatase.